A 140-amino-acid chain; its full sequence is Ribosome-binding factor A (140 aa).

A disordered region spans residues 121 to 140 (KAAEHGREDEELDDTEQDDK). Over residues 129-140 (DEELDDTEQDDK) the composition is skewed to acidic residues.

It belongs to the RbfA family. As to quaternary structure, monomer. Binds 30S ribosomal subunits, but not 50S ribosomal subunits or 70S ribosomes.

The protein localises to the cytoplasm. Functionally, one of several proteins that assist in the late maturation steps of the functional core of the 30S ribosomal subunit. Associates with free 30S ribosomal subunits (but not with 30S subunits that are part of 70S ribosomes or polysomes). Required for efficient processing of 16S rRNA. May interact with the 5'-terminal helix region of 16S rRNA. The polypeptide is Ribosome-binding factor A (Shewanella loihica (strain ATCC BAA-1088 / PV-4)).